Consider the following 86-residue polypeptide: Muscarinic toxin-like protein (86 aa).

Residues 1–21 form the signal peptide; the sequence is MKTLLLTLAVVTMVCMDLGYT. 4 disulfide bridges follow: Cys-24/Cys-45, Cys-38/Cys-62, Cys-66/Cys-78, and Cys-79/Cys-84.

It belongs to the three-finger toxin family. Short-chain subfamily. Orphan group VIII (haditoxin) sub-subfamily. Homodimer; non-covalently linked. As to expression, expressed by the venom gland.

It is found in the secreted. Antagonist of muscle and neuronal nicotinic acetylcholine receptors (nAChR) with highest affinity for neuronal alpha-7/CHRNA7 nAChRs. The polypeptide is Muscarinic toxin-like protein (Bungarus multicinctus (Many-banded krait)).